The primary structure comprises 89 residues: UPF0297 protein lp_2275 (89 aa).

This sequence belongs to the UPF0297 family.

The chain is UPF0297 protein lp_2275 from Lactiplantibacillus plantarum (strain ATCC BAA-793 / NCIMB 8826 / WCFS1) (Lactobacillus plantarum).